Consider the following 249-residue polypeptide: Segregation and condensation protein A (249 aa).

Belongs to the ScpA family. As to quaternary structure, component of a cohesin-like complex composed of ScpA, ScpB and the Smc homodimer, in which ScpA and ScpB bind to the head domain of Smc. The presence of the three proteins is required for the association of the complex with DNA.

The protein localises to the cytoplasm. Participates in chromosomal partition during cell division. May act via the formation of a condensin-like complex containing Smc and ScpB that pull DNA away from mid-cell into both cell halves. In Mycoplasmopsis pulmonis (strain UAB CTIP) (Mycoplasma pulmonis), this protein is Segregation and condensation protein A.